Here is a 415-residue protein sequence, read N- to C-terminus: ER-derived vesicles protein ERV46 (415 aa).

Residues 1 to 24 are Cytoplasmic-facing; the sequence is MKRSTLLSLDAFAKTEEDVRVRTR. A helical membrane pass occupies residues 25–45; it reads AGGLITLSCILTTLFLLVNEW. Residues 46–376 are Lumenal-facing; sequence GQFNSVVTRP…VINKEQHGQT (331 aa). A helical transmembrane segment spans residues 377-397; the sequence is WSGFILNCITSIGGVLAVGTV. Over 398–415 the chain is Cytoplasmic; it reads MDKLFYKAQRSIWGKKSQ. The short motif at 402 to 403 is the Phenylalanine-tyrosine motif element; that stretch reads FY.

It belongs to the ERGIC family. In terms of assembly, interacts with ERV41.

It is found in the endoplasmic reticulum membrane. The protein localises to the golgi apparatus membrane. Functionally, constituent of COPII-coated endoplasmic reticulum-derived transport vesicles. Required for efficient transport of a subset of secretory proteins to the Golgi. The C-terminal Phe-Tyr motif is required for exit from the endoplasmic reticulum. Facilitates retrograde transport from the Golgi to the endoplasmic reticulum. This Saccharomyces cerevisiae (strain ATCC 204508 / S288c) (Baker's yeast) protein is ER-derived vesicles protein ERV46 (ERV46).